A 277-amino-acid polypeptide reads, in one-letter code: Shikimate dehydrogenase (NADP(+)) (277 aa).

Residues 15–17 (SKS) and T62 each bind shikimate. The active-site Proton acceptor is K66. NADP(+) is bound at residue E78. Residues N87 and D103 each contribute to the shikimate site. NADP(+)-binding positions include 127–131 (GAGGA), 151–156 (NRTHEK), and G238.

Belongs to the shikimate dehydrogenase family. As to quaternary structure, homodimer.

It catalyses the reaction shikimate + NADP(+) = 3-dehydroshikimate + NADPH + H(+). It participates in metabolic intermediate biosynthesis; chorismate biosynthesis; chorismate from D-erythrose 4-phosphate and phosphoenolpyruvate: step 4/7. Its function is as follows. Involved in the biosynthesis of the chorismate, which leads to the biosynthesis of aromatic amino acids. Catalyzes the reversible NADPH linked reduction of 3-dehydroshikimate (DHSA) to yield shikimate (SA). The sequence is that of Shikimate dehydrogenase (NADP(+)) from Shewanella frigidimarina (strain NCIMB 400).